A 436-amino-acid chain; its full sequence is UPF0597 protein YhaM (436 aa).

Belongs to the UPF0597 family.

The protein is UPF0597 protein YhaM of Escherichia coli O7:K1 (strain IAI39 / ExPEC).